Reading from the N-terminus, the 48-residue chain is uncharacterized protein (48 aa).

A helical membrane pass occupies residues 25 to 47 (TFASIGVTVGVQIVILLIWGLSW).

It localises to the membrane. This is an uncharacterized protein from Archaeoglobus fulgidus (strain ATCC 49558 / DSM 4304 / JCM 9628 / NBRC 100126 / VC-16).